An 82-amino-acid polypeptide reads, in one-letter code: ATP synthase subunit c, chloroplastic (82 aa).

The next 2 helical transmembrane spans lie at 3–23 (PIISAASVIAAGLAVGLAAIG) and 57–77 (LAFMESLTIYGLVVALSLLFA).

Belongs to the ATPase C chain family. In terms of assembly, F-type ATPases have 2 components, F(1) - the catalytic core - and F(0) - the membrane proton channel. F(1) has five subunits: alpha(3), beta(3), gamma(1), delta(1), epsilon(1). F(0) has four main subunits: a(1), b(1), b'(1) and c(10-14). The alpha and beta chains form an alternating ring which encloses part of the gamma chain. F(1) is attached to F(0) by a central stalk formed by the gamma and epsilon chains, while a peripheral stalk is formed by the delta, b and b' chains.

It is found in the plastid. The protein localises to the chloroplast thylakoid membrane. F(1)F(0) ATP synthase produces ATP from ADP in the presence of a proton or sodium gradient. F-type ATPases consist of two structural domains, F(1) containing the extramembraneous catalytic core and F(0) containing the membrane proton channel, linked together by a central stalk and a peripheral stalk. During catalysis, ATP synthesis in the catalytic domain of F(1) is coupled via a rotary mechanism of the central stalk subunits to proton translocation. Functionally, key component of the F(0) channel; it plays a direct role in translocation across the membrane. A homomeric c-ring of between 10-14 subunits forms the central stalk rotor element with the F(1) delta and epsilon subunits. The chain is ATP synthase subunit c, chloroplastic from Cyanidium caldarium (Red alga).